The chain runs to 423 residues: DUF21 domain-containing protein At2g14520 (423 aa).

At 1–11 (MAVEYECCGTS) the chain is on the extracellular side. Positions 8–191 (CGTSFFIHIA…GKGGELTHDE (184 aa)) constitute a CNNM transmembrane domain. A helical transmembrane segment spans residues 12-32 (FFIHIAVIVLLVLFAGLMSGL). At 33-70 (TLGLMSMSLVDLEVLAKSGTPRDRIHAAKILPVVKNQH) the chain is on the cytoplasmic side. The helical transmembrane segment at 71 to 91 (LLLCTLLICNAAAMEALPIFL) threads the bilayer. At 92–94 (DAL) the chain is on the extracellular side. The helical transmembrane segment at 95 to 115 (VTAWGAILISVTLILLFGEII) threads the bilayer. Residues 116–136 (PQSVCSRHGLAIGATVAPFVR) are Cytoplasmic-facing. Residues 137–157 (VLVWICLPVAWPISKLLDFLL) traverse the membrane as a helical segment. The Extracellular segment spans residues 158–423 (GHGRVALFRR…DETDHHFEDL (266 aa)). In terms of domain architecture, CBS 1 spans 210–271 (MTPISDTFVI…TINPDEEIQV (62 aa)). 2 N-linked (GlcNAc...) asparagine glycosylation sites follow: N273 and N322. CBS domains lie at 275-332 (TIRR…RVDV) and 356-415 (PNRA…IFDE).

Its subcellular location is the membrane. In Arabidopsis thaliana (Mouse-ear cress), this protein is DUF21 domain-containing protein At2g14520 (CBSDUF3).